The primary structure comprises 231 residues: 5'-methylthioadenosine/S-adenosylhomocysteine nucleosidase (231 aa).

Glutamate 12 functions as the Proton acceptor in the catalytic mechanism. Substrate is bound by residues glycine 78, valine 153, and 174 to 175 (ME). Aspartate 198 functions as the Proton donor in the catalytic mechanism.

It belongs to the PNP/UDP phosphorylase family. MtnN subfamily.

The enzyme catalyses S-adenosyl-L-homocysteine + H2O = S-(5-deoxy-D-ribos-5-yl)-L-homocysteine + adenine. The catalysed reaction is S-methyl-5'-thioadenosine + H2O = 5-(methylsulfanyl)-D-ribose + adenine. It carries out the reaction 5'-deoxyadenosine + H2O = 5-deoxy-D-ribose + adenine. The protein operates within amino-acid biosynthesis; L-methionine biosynthesis via salvage pathway; S-methyl-5-thio-alpha-D-ribose 1-phosphate from S-methyl-5'-thioadenosine (hydrolase route): step 1/2. Functionally, catalyzes the irreversible cleavage of the glycosidic bond in both 5'-methylthioadenosine (MTA) and S-adenosylhomocysteine (SAH/AdoHcy) to adenine and the corresponding thioribose, 5'-methylthioribose and S-ribosylhomocysteine, respectively. Also cleaves 5'-deoxyadenosine, a toxic by-product of radical S-adenosylmethionine (SAM) enzymes, into 5-deoxyribose and adenine. This Aliivibrio fischeri (strain MJ11) (Vibrio fischeri) protein is 5'-methylthioadenosine/S-adenosylhomocysteine nucleosidase.